The chain runs to 258 residues: Probable parvulin-type peptidyl-prolyl cis-trans isomerase (258 aa).

The N-terminal stretch at 1–19 is a signal peptide; that stretch reads MKRIAMLAAACVIAVPAFA. A PpiC domain is found at 127–219; it reads KMEYKVRHIL…FGWHVIQVDD (93 aa).

Belongs to the PpiC/parvulin rotamase family.

It catalyses the reaction [protein]-peptidylproline (omega=180) = [protein]-peptidylproline (omega=0). This Bordetella parapertussis (strain 12822 / ATCC BAA-587 / NCTC 13253) protein is Probable parvulin-type peptidyl-prolyl cis-trans isomerase.